Here is a 344-residue protein sequence, read N- to C-terminus: Heat-inducible transcription repressor HrcA (344 aa).

It belongs to the HrcA family.

Its function is as follows. Negative regulator of class I heat shock genes (grpE-dnaK-dnaJ and groELS operons). Prevents heat-shock induction of these operons. The polypeptide is Heat-inducible transcription repressor HrcA (Anoxybacillus flavithermus (strain DSM 21510 / WK1)).